The chain runs to 207 residues: Small ribosomal subunit protein uS4c (207 aa).

One can recognise an S4 RNA-binding domain in the interval 92-156; it reads MRLDNILFRL…YQSIITKRIE (65 aa).

Belongs to the universal ribosomal protein uS4 family. In terms of assembly, part of the 30S ribosomal subunit. Contacts protein S5. The interaction surface between S4 and S5 is involved in control of translational fidelity.

It localises to the plastid. It is found in the chloroplast. Functionally, one of the primary rRNA binding proteins, it binds directly to 16S rRNA where it nucleates assembly of the body of the 30S subunit. With S5 and S12 plays an important role in translational accuracy. In Equisetum arvense (Field horsetail), this protein is Small ribosomal subunit protein uS4c (rps4).